The chain runs to 170 residues: Ribosome maturation factor RimM (170 aa).

Positions 92 to 163 constitute a PRC barrel domain; sequence KEGWYYFELE…RMDVELPPGL (72 aa).

Belongs to the RimM family. In terms of assembly, binds ribosomal protein uS19.

The protein localises to the cytoplasm. An accessory protein needed during the final step in the assembly of 30S ribosomal subunit, possibly for assembly of the head region. Essential for efficient processing of 16S rRNA. May be needed both before and after RbfA during the maturation of 16S rRNA. It has affinity for free ribosomal 30S subunits but not for 70S ribosomes. In Desulfitobacterium hafniense (strain Y51), this protein is Ribosome maturation factor RimM.